An 859-amino-acid polypeptide reads, in one-letter code: Protein SEY1 (859 aa).

At 1-742 the chain is on the cytoplasmic side; that stretch reads MMMNSHFAGV…KRSAIGGITQ (742 aa). The 243-residue stretch at 49-291 folds into the GB1/RHD3-type G domain; the sequence is GFNYHLISVF…FQPQYHRRIP (243 aa). Residue 59–66 participates in GTP binding; sequence GSQSTGKS. Positions 476 to 496 form a coiled coil; that stretch reads FEHELKVYRKDLDDVSGRLRK. The segment at 525-544 is disordered; sequence LGTGRGGSGAPEHGERPPSE. Residues 743–763 traverse the membrane as a helical segment; the sequence is VPLYFYGLLVALGWNEIVAVL. Topologically, residues 764 to 766 are lumenal; the sequence is RNP. A helical transmembrane segment spans residues 767–787; the sequence is VYFIFLILCAVGAYVTYTLNL. The Cytoplasmic portion of the chain corresponds to 788–859; the sequence is WGPMIRMGNA…DAEVEDLDDI (72 aa). The interval 816–859 is disordered; it reads SSESGRQAMAMSGNQPRGESVRMNRLNGNGKKDEDAEVEDLDDI. Residues 850–859 show a composition bias toward acidic residues; sequence DAEVEDLDDI.

The protein belongs to the TRAFAC class dynamin-like GTPase superfamily. GB1/RHD3 GTPase family. RHD3 subfamily.

It localises to the endoplasmic reticulum membrane. Its function is as follows. Cooperates with the reticulon proteins and tubule-shaping DP1 family proteins to generate and maintain the structure of the tubular endoplasmic reticulum network. Has GTPase activity, which is required for its function in ER organization. This is Protein SEY1 from Phaeosphaeria nodorum (strain SN15 / ATCC MYA-4574 / FGSC 10173) (Glume blotch fungus).